Reading from the N-terminus, the 465-residue chain is Cysteine--tRNA ligase (465 aa).

Residue Cys-27 coordinates Zn(2+). The 'HIGH' region signature appears at 29-39 (PTVYNFFHIGN). The Zn(2+) site is built by Cys-207, His-232, and Glu-236. Residues 264–268 (KMSKS) carry the 'KMSKS' region motif. Residue Lys-267 coordinates ATP.

This sequence belongs to the class-I aminoacyl-tRNA synthetase family. In terms of assembly, monomer. It depends on Zn(2+) as a cofactor.

The protein resides in the cytoplasm. The enzyme catalyses tRNA(Cys) + L-cysteine + ATP = L-cysteinyl-tRNA(Cys) + AMP + diphosphate. This Clostridium botulinum (strain Loch Maree / Type A3) protein is Cysteine--tRNA ligase.